The primary structure comprises 134 residues: Arsenate reductase (134 aa).

Catalysis depends on nucleophile residues cysteine 11, cysteine 83, and cysteine 90. 2 disulfides stabilise this stretch: cysteine 11/cysteine 83 and cysteine 83/cysteine 90.

It belongs to the low molecular weight phosphotyrosine protein phosphatase family. Thioredoxin-coupled ArsC subfamily.

It localises to the cytoplasm. It catalyses the reaction arsenate + [thioredoxin]-dithiol + H(+) = arsenite + [thioredoxin]-disulfide + H2O. Its function is as follows. Catalyzes the reduction of arsenate [As(V)] to arsenite [As(III)]. The chain is Arsenate reductase from Bacillus cereus (strain Q1).